The sequence spans 849 residues: Villin-1 (849 aa).

Gelsolin-like repeat units lie at residues 30-107 (IEKS…DKFL), 147-213 (RVTE…EDGK), 262-335 (VPVE…TVEF), 405-475 (QEQL…PEMF), and 527-566 (AIQV…DHNL). Positions 739–849 (ETPERSLRKS…AVATGTPRRR (111 aa)) are disordered. Low complexity-rich tracts occupy residues 747–782 (KSSS…SAST) and 791–823 (PAAL…STPS).

It belongs to the villin/gelsolin family. Expressed in roots, young leaves, and inflorescences, mostly in the vasculature of roots, leaves, and filaments of the anthers. Also detected in guard cells.

It is found in the cytoplasm. The protein resides in the cytoskeleton. Functionally, ca(2+)-independent actin-binding protein. Binds actin microfilaments (MFs). Involved in actin filament bundling, severing and capping. Caps the barbed end of actin filaments and protects them from disassembly. Promotes VLN3-mediated MF severing. This Oryza sativa subsp. japonica (Rice) protein is Villin-1.